Here is a 278-residue protein sequence, read N- to C-terminus: Probable endonuclease 4 (278 aa).

Histidine 67, histidine 107, glutamate 141, aspartate 173, histidine 176, histidine 210, aspartate 223, histidine 225, and glutamate 255 together coordinate Zn(2+).

The protein belongs to the AP endonuclease 2 family. Zn(2+) serves as cofactor.

It carries out the reaction Endonucleolytic cleavage to 5'-phosphooligonucleotide end-products.. Functionally, endonuclease IV plays a role in DNA repair. It cleaves phosphodiester bonds at apurinic or apyrimidinic (AP) sites, generating a 3'-hydroxyl group and a 5'-terminal sugar phosphate. The chain is Probable endonuclease 4 from Natronomonas pharaonis (strain ATCC 35678 / DSM 2160 / CIP 103997 / JCM 8858 / NBRC 14720 / NCIMB 2260 / Gabara) (Halobacterium pharaonis).